An 89-amino-acid polypeptide reads, in one-letter code: Large ribosomal subunit protein bL28 (89 aa).

This sequence belongs to the bacterial ribosomal protein bL28 family.

In Chlamydia caviae (strain ATCC VR-813 / DSM 19441 / 03DC25 / GPIC) (Chlamydophila caviae), this protein is Large ribosomal subunit protein bL28.